The following is a 474-amino-acid chain: tRNA-2-methylthio-N(6)-dimethylallyladenosine synthase (474 aa).

The MTTase N-terminal domain occupies 3 to 120 (KKLHIKTWGC…LPEMINQVKG (118 aa)). [4Fe-4S] cluster contacts are provided by Cys12, Cys49, Cys83, Cys157, Cys161, and Cys164. The Radical SAM core domain occupies 143–375 (RAEGPTAFVS…QERINQQAMA (233 aa)). One can recognise a TRAM domain in the interval 378–441 (RRMLGTTQRI…PNSLRGKVIR (64 aa)).

The protein belongs to the methylthiotransferase family. MiaB subfamily. As to quaternary structure, monomer. It depends on [4Fe-4S] cluster as a cofactor.

It is found in the cytoplasm. It catalyses the reaction N(6)-dimethylallyladenosine(37) in tRNA + (sulfur carrier)-SH + AH2 + 2 S-adenosyl-L-methionine = 2-methylsulfanyl-N(6)-dimethylallyladenosine(37) in tRNA + (sulfur carrier)-H + 5'-deoxyadenosine + L-methionine + A + S-adenosyl-L-homocysteine + 2 H(+). Its function is as follows. Catalyzes the methylthiolation of N6-(dimethylallyl)adenosine (i(6)A), leading to the formation of 2-methylthio-N6-(dimethylallyl)adenosine (ms(2)i(6)A) at position 37 in tRNAs that read codons beginning with uridine. The polypeptide is tRNA-2-methylthio-N(6)-dimethylallyladenosine synthase (Cronobacter sakazakii (strain ATCC BAA-894) (Enterobacter sakazakii)).